The primary structure comprises 121 residues: Basic phospholipase A2 BbTX-III (121 aa).

The Ca(2+) site is built by Tyr27, Gly29, and Gly31. 6 disulfide bridges follow: Cys28-Cys44, Cys43-Cys95, Cys49-Cys121, Cys50-Cys88, Cys58-Cys82, and Cys76-Cys86. His47 is an active-site residue. Residue Asp48 coordinates Ca(2+). Asp89 is an active-site residue.

This sequence belongs to the phospholipase A2 family. Group II subfamily. D49 sub-subfamily. Homodimer; non-covalently linked. Ca(2+) serves as cofactor. Expressed by the venom gland.

The protein resides in the secreted. It catalyses the reaction a 1,2-diacyl-sn-glycero-3-phosphocholine + H2O = a 1-acyl-sn-glycero-3-phosphocholine + a fatty acid + H(+). Functionally, snake venom phospholipase A2 (PLA2) that exhibits myotoxin and anticoagulant activity. Displays edema-inducing activities in mouse paw. Also displays cytotoxic activity against some cell lines and myotubes, and antimicrobial activities against E.coli, C.albicans and Leishmania. PLA2 catalyzes the calcium-dependent hydrolysis of the 2-acyl groups in 3-sn-phosphoglycerides. The chain is Basic phospholipase A2 BbTX-III from Bothrops brazili (Brazil's lancehead).